A 359-amino-acid polypeptide reads, in one-letter code: Small ribosomal subunit protein uS2 (359 aa).

A disordered region spans residues 232–295 (EPQFKPSEFT…PVGTEPVATT (64 aa)). Basic and acidic residues-rich tracts occupy residues 239–250 (EFTRRDGDENRN) and 257–273 (DNRR…DTHY).

The protein belongs to the universal ribosomal protein uS2 family.

The chain is Small ribosomal subunit protein uS2 (rpsB) from Spiroplasma citri.